The sequence spans 178 residues: NADPH azoreductase (178 aa).

106 to 111 (GGGKGG) contributes to the NADP(+) binding site.

It belongs to the azoreductase type 2 family. As to quaternary structure, monomer.

It carries out the reaction N,N-dimethyl-1,4-phenylenediamine + aniline + 2 NADP(+) = 4-(dimethylamino)azobenzene + 2 NADPH + 2 H(+). In terms of biological role, catalyzes the reductive cleavage of azo bond in aromatic azo compounds to the corresponding amines. Requires NADPH as an electron donor for its activity. Compounds with paired naphthalene groups coupled with the azo group are good substrates, with the following preference order: Rocceline &gt; Sumifix Black B &gt; Solar Orange. This is NADPH azoreductase (azr) from Bacillus sp. (strain OY1-2).